The sequence spans 58 residues: MAGAESDGQFQFTGIKKYFNSYTLTGRMNCVLATYGGIALLVLYFKLRPKKTPAVKAT.

2 positions are modified to N6-acetyllysine: Lys16 and Lys17. The helical transmembrane segment at 23–45 (TLTGRMNCVLATYGGIALLVLYF) threads the bilayer.

In terms of assembly, component of the ATP synthase complex composed at least of ATP5F1A/subunit alpha, ATP5F1B/subunit beta, ATP5MC1/subunit c (homooctomer), MT-ATP6/subunit a, MT-ATP8/subunit 8, ATP5ME/subunit e, ATP5MF/subunit f, ATP5MG/subunit g, ATP5MK/subunit k, ATP5MJ/subunit j, ATP5F1C/subunit gamma, ATP5F1D/subunit delta, ATP5F1E/subunit epsilon, ATP5PF/subunit F6, ATP5PB/subunit b, ATP5PD/subunit d, ATP5PO/subunit OSCP. ATP synthase complex consists of a soluble F(1) head domain (subunits alpha(3) and beta(3)) - the catalytic core - and a membrane F(0) domain - the membrane proton channel (subunits c, a, 8, e, f, g, k and j). These two domains are linked by a central stalk (subunits gamma, delta, and epsilon) rotating inside the F1 region and a stationary peripheral stalk (subunits F6, b, d, and OSCP). The ATP synthase complex/complex V exists as a monomeric and a dimeric supercomplex that helps shape mitochondrial cristae to optimize proton flow.

The protein resides in the mitochondrion membrane. In terms of biological role, subunit k, of the mitochondrial membrane ATP synthase complex (F(1)F(0) ATP synthase or Complex V) that produces ATP from ADP in the presence of a proton gradient across the membrane which is generated by electron transport complexes of the respiratory chain. ATP synthase complex consist of a soluble F(1) head domain - the catalytic core - and a membrane F(1) domain - the membrane proton channel. These two domains are linked by a central stalk rotating inside the F(1) region and a stationary peripheral stalk. During catalysis, ATP synthesis in the catalytic domain of F(1) is coupled via a rotary mechanism of the central stalk subunits to proton translocation. In vivo, can only synthesize ATP although its ATP hydrolase activity can be activated artificially in vitro. Part of the complex F(0) domain. Required for dimerization of the ATP synthase complex and as such regulates ATP synthesis in the mitochondria. The protein is ATP synthase F(0) complex subunit k, mitochondrial of Mus musculus (Mouse).